The primary structure comprises 260 residues: 1-(5-phosphoribosyl)-5-[(5-phosphoribosylamino)methylideneamino] imidazole-4-carboxamide isomerase (260 aa).

Aspartate 8 serves as the catalytic Proton acceptor. Aspartate 130 (proton donor) is an active-site residue.

Belongs to the HisA/HisF family.

The protein localises to the cytoplasm. It catalyses the reaction 1-(5-phospho-beta-D-ribosyl)-5-[(5-phospho-beta-D-ribosylamino)methylideneamino]imidazole-4-carboxamide = 5-[(5-phospho-1-deoxy-D-ribulos-1-ylimino)methylamino]-1-(5-phospho-beta-D-ribosyl)imidazole-4-carboxamide. The protein operates within amino-acid biosynthesis; L-histidine biosynthesis; L-histidine from 5-phospho-alpha-D-ribose 1-diphosphate: step 4/9. The sequence is that of 1-(5-phosphoribosyl)-5-[(5-phosphoribosylamino)methylideneamino] imidazole-4-carboxamide isomerase from Chlorobaculum parvum (strain DSM 263 / NCIMB 8327) (Chlorobium vibrioforme subsp. thiosulfatophilum).